The chain runs to 319 residues: ATP-dependent 6-phosphofructokinase (319 aa).

Gly11 contributes to the ATP binding site. Residue 21 to 25 participates in ADP binding; the sequence is RAVVR. ATP contacts are provided by residues 72-73 and 102-105; these read RC and GDGS. Asp103 is a binding site for Mg(2+). A substrate-binding site is contributed by 125 to 127; sequence TID. The active-site Proton acceptor is Asp127. An ADP-binding site is contributed by Arg154. Substrate contacts are provided by residues Arg162 and 169 to 171; that span reads MGR. Residues 185–187, Arg211, and 213–215 contribute to the ADP site; these read GAE and KKH. Substrate is bound by residues Glu222, Arg243, and 249 to 252; that span reads HIQR.

Belongs to the phosphofructokinase type A (PFKA) family. ATP-dependent PFK group I subfamily. Prokaryotic clade 'B1' sub-subfamily. In terms of assembly, homotetramer. Mg(2+) is required as a cofactor.

It localises to the cytoplasm. It carries out the reaction beta-D-fructose 6-phosphate + ATP = beta-D-fructose 1,6-bisphosphate + ADP + H(+). It participates in carbohydrate degradation; glycolysis; D-glyceraldehyde 3-phosphate and glycerone phosphate from D-glucose: step 3/4. Its activity is regulated as follows. Allosterically activated by ADP and other diphosphonucleosides, and allosterically inhibited by phosphoenolpyruvate. Functionally, catalyzes the phosphorylation of D-fructose 6-phosphate to fructose 1,6-bisphosphate by ATP, the first committing step of glycolysis. This chain is ATP-dependent 6-phosphofructokinase, found in Shouchella clausii (strain KSM-K16) (Alkalihalobacillus clausii).